Consider the following 459-residue polypeptide: Cysteine--tRNA ligase (459 aa).

A Zn(2+)-binding site is contributed by Cys-28. Residues 30-40 (VTIYDLCHIGH) carry the 'HIGH' region motif. Residues Cys-209, His-234, and Glu-238 each coordinate Zn(2+). The short motif at 266–270 (KMSKS) is the 'KMSKS' region element. Residue Lys-269 participates in ATP binding.

Belongs to the class-I aminoacyl-tRNA synthetase family. As to quaternary structure, monomer. It depends on Zn(2+) as a cofactor.

It is found in the cytoplasm. The catalysed reaction is tRNA(Cys) + L-cysteine + ATP = L-cysteinyl-tRNA(Cys) + AMP + diphosphate. This is Cysteine--tRNA ligase from Shewanella baltica (strain OS185).